A 939-amino-acid chain; its full sequence is Tyrosine-protein kinase Shark (939 aa).

The region spanning 10–106 (WYHGNLSREA…GLPTKLTVPL (97 aa)) is the SH2 1 domain. ANK repeat units lie at residues 153 to 185 (DGQTALHLAALHSDEDILKHLLNAKVQVNSSDS), 186 to 218 (FGCQPLHYAARSKPASFIRTLISAQANVQGRNI), and 220 to 252 (NGYVPLHEAAKHGNLEAVQELLLAEAPPLPRTS). In terms of domain architecture, SH2 2 spans 288 to 403 (WYHGTLTREE…GLPVSLKYPV (116 aa)). 2 disordered regions span residues 410-446 (EVPSFATIPRSNMKPKAASPATPPTPVSPHSHHQHPH) and 476-505 (ALFDMNSLRKNKSKGKRSDSESSVSGSLAG). The segment covering 496–505 (ESSVSGSLAG) has biased composition (polar residues). Residues 662–921 (LVLDREIGHG…PTFVYLTEFF (260 aa)) form the Protein kinase domain. Residues 668-676 (IGHGEFGSV) and Lys-698 each bind ATP. Asp-789 functions as the Proton acceptor in the catalytic mechanism. At Tyr-927 the chain carries Phosphotyrosine.

The protein belongs to the protein kinase superfamily. Tyr protein kinase family. As to quaternary structure, interacts with drpr; this is required for the recruitment of drpr and glial cells to severed axons and for the phagocytosis of axonal debris by glial cells following axon injury. As to expression, gastrulation embryos show expression in ectodermal cells along the cephalic furrow and ventral midline. Proctodeum, stomodeum and their derived structures (foregut, atrium, pharynx, esophagus and hindgut) continue to show expression from stage 8-9 to late embryos. Other ectodermally derived structures (frontal sac, salivary gland and labium) and developing tracheal system also show expression.

Its subcellular location is the cytoplasm. The enzyme catalyses L-tyrosyl-[protein] + ATP = O-phospho-L-tyrosyl-[protein] + ADP + H(+). Functionally, following axon injury, required for recruitment of drpr and glial cells to severed axons and for glial clearance of severed axons from the central nervous system. Together with Src42a and drpr, promotes the migration of macrophages to sites of wounding as part of a signaling cascade where Scr42a detects production of hydrogen peroxide at wound sites which triggers phosphorylation of drpr and subsequent recruitment and activation of shark. May be involved in signal transduction on the apical surface of ectodermal epithelial cells, regulating their polarity during invagination. Crumbs (crb) may be the intracellular signal. In Drosophila melanogaster (Fruit fly), this protein is Tyrosine-protein kinase Shark.